Here is a 384-residue protein sequence, read N- to C-terminus: tRNA-specific 2-thiouridylase MnmA (384 aa).

The tract at residues 1–26 (MDEGIRASGGIRACQTGKQKQGRKRP) is disordered. ATP-binding positions include 36-43 (GMSGGVDS) and M62. An interaction with target base in tRNA region spans residues 122–124 (NPD). C127 (nucleophile) is an active-site residue. Residues C127 and C223 are joined by a disulfide bond. Residue G151 coordinates ATP. An interaction with tRNA region spans residues 173 to 175 (KDQ). The active-site Cysteine persulfide intermediate is the C223. Residues 334-335 (RY) are interaction with tRNA.

It belongs to the MnmA/TRMU family.

The protein localises to the cytoplasm. The catalysed reaction is S-sulfanyl-L-cysteinyl-[protein] + uridine(34) in tRNA + AH2 + ATP = 2-thiouridine(34) in tRNA + L-cysteinyl-[protein] + A + AMP + diphosphate + H(+). Functionally, catalyzes the 2-thiolation of uridine at the wobble position (U34) of tRNA, leading to the formation of s(2)U34. This chain is tRNA-specific 2-thiouridylase MnmA, found in Chromobacterium violaceum (strain ATCC 12472 / DSM 30191 / JCM 1249 / CCUG 213 / NBRC 12614 / NCIMB 9131 / NCTC 9757 / MK).